Reading from the N-terminus, the 540-residue chain is Chaperonin GroEL (540 aa).

ATP contacts are provided by residues 30-33, 87-91, Gly414, 479-481, and Asp495; these read TLGP, DGTTT, and NAL.

It belongs to the chaperonin (HSP60) family. In terms of assembly, forms a cylinder of 14 subunits composed of two heptameric rings stacked back-to-back. Interacts with the co-chaperonin GroES.

It localises to the cytoplasm. It carries out the reaction ATP + H2O + a folded polypeptide = ADP + phosphate + an unfolded polypeptide.. In terms of biological role, together with its co-chaperonin GroES, plays an essential role in assisting protein folding. The GroEL-GroES system forms a nano-cage that allows encapsulation of the non-native substrate proteins and provides a physical environment optimized to promote and accelerate protein folding. This Rubrobacter xylanophilus (strain DSM 9941 / JCM 11954 / NBRC 16129 / PRD-1) protein is Chaperonin GroEL.